Consider the following 120-residue polypeptide: UPF0102 protein NT01CX_2205 (120 aa).

The protein belongs to the UPF0102 family.

The polypeptide is UPF0102 protein NT01CX_2205 (Clostridium novyi (strain NT)).